We begin with the raw amino-acid sequence, 132 residues long: Small ribosomal subunit protein uS8 (132 aa).

This sequence belongs to the universal ribosomal protein uS8 family. In terms of assembly, part of the 30S ribosomal subunit. Contacts proteins S5 and S12.

Its function is as follows. One of the primary rRNA binding proteins, it binds directly to 16S rRNA central domain where it helps coordinate assembly of the platform of the 30S subunit. The polypeptide is Small ribosomal subunit protein uS8 (Ureaplasma urealyticum serovar 10 (strain ATCC 33699 / Western)).